The following is a 204-amino-acid chain: Inactive ribonuclease-like protein 9 (204 aa).

Positions 1-26 (MMRTLITTHPLLLLLLLQQLLQPVQF) are cleaved as a signal peptide. 3 disulfides stabilise this stretch: Cys97–Cys152, Cys115–Cys167, and Cys122–Cys129. Residues Asn130 and Asn142 are each glycosylated (N-linked (GlcNAc...) asparagine).

The protein belongs to the pancreatic ribonuclease family.

The protein localises to the secreted. Functionally, does not exhibit any ribonuclease activity. This Macaca mulatta (Rhesus macaque) protein is Inactive ribonuclease-like protein 9 (RNASE9).